The sequence spans 124 residues: Small ribosomal subunit protein uS12 (124 aa).

The disordered stretch occupies residues 1–25; it reads MPTINQLIRKPRKSQKEKTASPALQ. Asp-89 is modified (3-methylthioaspartic acid).

The protein belongs to the universal ribosomal protein uS12 family. Part of the 30S ribosomal subunit. Contacts proteins S8 and S17. May interact with IF1 in the 30S initiation complex.

Its function is as follows. With S4 and S5 plays an important role in translational accuracy. In terms of biological role, interacts with and stabilizes bases of the 16S rRNA that are involved in tRNA selection in the A site and with the mRNA backbone. Located at the interface of the 30S and 50S subunits, it traverses the body of the 30S subunit contacting proteins on the other side and probably holding the rRNA structure together. The combined cluster of proteins S8, S12 and S17 appears to hold together the shoulder and platform of the 30S subunit. This chain is Small ribosomal subunit protein uS12, found in Borrelia turicatae (strain 91E135).